The primary structure comprises 246 residues: Pyruvate formate-lyase 1-activating enzyme (246 aa).

The region spanning 16–239 (VDGPGIRFIT…MERVKGILEQ (224 aa)) is the Radical SAM core domain. The [4Fe-4S] cluster site is built by cysteine 30, cysteine 34, and cysteine 37. S-adenosyl-L-methionine-binding positions include 36-38 (YCH), glycine 79, 130-132 (DLK), and histidine 203.

This sequence belongs to the organic radical-activating enzymes family. [4Fe-4S] cluster is required as a cofactor.

It localises to the cytoplasm. It catalyses the reaction glycyl-[formate C-acetyltransferase] + reduced [flavodoxin] + S-adenosyl-L-methionine = glycin-2-yl radical-[formate C-acetyltransferase] + semiquinone [flavodoxin] + 5'-deoxyadenosine + L-methionine + H(+). Its function is as follows. Activation of pyruvate formate-lyase 1 under anaerobic conditions by generation of an organic free radical, using S-adenosylmethionine and reduced flavodoxin as cosubstrates to produce 5'-deoxy-adenosine. The chain is Pyruvate formate-lyase 1-activating enzyme (pflA) from Escherichia coli O157:H7.